The primary structure comprises 122 residues: Large ribosomal subunit protein uL14 (122 aa).

The protein belongs to the universal ribosomal protein uL14 family. Part of the 50S ribosomal subunit. Forms a cluster with proteins L3 and L19. In the 70S ribosome, L14 and L19 interact and together make contacts with the 16S rRNA in bridges B5 and B8.

In terms of biological role, binds to 23S rRNA. Forms part of two intersubunit bridges in the 70S ribosome. The chain is Large ribosomal subunit protein uL14 from Borreliella burgdorferi (strain ATCC 35210 / DSM 4680 / CIP 102532 / B31) (Borrelia burgdorferi).